A 103-amino-acid chain; its full sequence is Small ribosomal subunit protein uS10 (103 aa).

The protein belongs to the universal ribosomal protein uS10 family. In terms of assembly, part of the 30S ribosomal subunit.

Its function is as follows. Involved in the binding of tRNA to the ribosomes. This chain is Small ribosomal subunit protein uS10, found in Bordetella petrii (strain ATCC BAA-461 / DSM 12804 / CCUG 43448).